The following is a 176-amino-acid chain: uncharacterized protein (176 aa).

This is an uncharacterized protein from Caenorhabditis elegans.